A 271-amino-acid polypeptide reads, in one-letter code: Formamidopyrimidine-DNA glycosylase (271 aa).

Residue proline 2 is the Schiff-base intermediate with DNA of the active site. The active-site Proton donor is the glutamate 3. The active-site Proton donor; for beta-elimination activity is lysine 57. The DNA site is built by histidine 90, arginine 109, and lysine 150. The FPG-type zinc finger occupies 235 to 269 (LVYGNKDKPCPKCGGKIESLIIGQRNSFFCPKCQK). The Proton donor; for delta-elimination activity role is filled by arginine 259.

Belongs to the FPG family. Monomer. Requires Zn(2+) as cofactor.

It carries out the reaction Hydrolysis of DNA containing ring-opened 7-methylguanine residues, releasing 2,6-diamino-4-hydroxy-5-(N-methyl)formamidopyrimidine.. The enzyme catalyses 2'-deoxyribonucleotide-(2'-deoxyribose 5'-phosphate)-2'-deoxyribonucleotide-DNA = a 3'-end 2'-deoxyribonucleotide-(2,3-dehydro-2,3-deoxyribose 5'-phosphate)-DNA + a 5'-end 5'-phospho-2'-deoxyribonucleoside-DNA + H(+). Its function is as follows. Involved in base excision repair of DNA damaged by oxidation or by mutagenic agents. Acts as a DNA glycosylase that recognizes and removes damaged bases. Has a preference for oxidized purines, such as 7,8-dihydro-8-oxoguanine (8-oxoG). Has AP (apurinic/apyrimidinic) lyase activity and introduces nicks in the DNA strand. Cleaves the DNA backbone by beta-delta elimination to generate a single-strand break at the site of the removed base with both 3'- and 5'-phosphates. The polypeptide is Formamidopyrimidine-DNA glycosylase (Haemophilus influenzae (strain PittEE)).